The chain runs to 320 residues: Minor outer capsid protein P9 (320 aa).

The tract at residues 297-320 is disordered; that stretch reads RNDDEEELAGSEFTSLLSDDGRMG.

It belongs to the phytoreovirus minor outer capsid protein P9 family.

It localises to the virion. It is found in the host cytoplasm. Minor outer capsid protein. This chain is Minor outer capsid protein P9, found in Rice gall dwarf virus (RGDV).